The sequence spans 286 residues: 33 kDa chaperonin (286 aa).

Intrachain disulfides connect cysteine 233–cysteine 235 and cysteine 267–cysteine 270.

Belongs to the HSP33 family. In terms of processing, under oxidizing conditions two disulfide bonds are formed involving the reactive cysteines. Under reducing conditions zinc is bound to the reactive cysteines and the protein is inactive.

Its subcellular location is the cytoplasm. Its function is as follows. Redox regulated molecular chaperone. Protects both thermally unfolding and oxidatively damaged proteins from irreversible aggregation. Plays an important role in the bacterial defense system toward oxidative stress. This is 33 kDa chaperonin from Histophilus somni (strain 2336) (Haemophilus somnus).